Reading from the N-terminus, the 595-residue chain is Glutamyl-tRNA(Gln) amidotransferase subunit B, mitochondrial (595 aa).

The N-terminal 72 residues, 1-72, are a transit peptide targeting the mitochondrion; sequence MPRLWYSRYL…RAKSQSRNGR (72 aa).

It belongs to the GatB/GatE family. GatB subfamily. As to quaternary structure, subunit of the heterotrimeric GatCAB amidotransferase (AdT) complex, composed of A, B and C subunits.

The protein resides in the mitochondrion. It catalyses the reaction L-glutamyl-tRNA(Gln) + L-glutamine + ATP + H2O = L-glutaminyl-tRNA(Gln) + L-glutamate + ADP + phosphate + H(+). In terms of biological role, allows the formation of correctly charged Gln-tRNA(Gln) through the transamidation of misacylated Glu-tRNA(Gln) in the mitochondria. The reaction takes place in the presence of glutamine and ATP through an activated gamma-phospho-Glu-tRNA(Gln). This Talaromyces marneffei (strain ATCC 18224 / CBS 334.59 / QM 7333) (Penicillium marneffei) protein is Glutamyl-tRNA(Gln) amidotransferase subunit B, mitochondrial.